The following is a 490-amino-acid chain: Cytochrome P450 2C2 (490 aa).

Position 435 (Cys435) interacts with heme.

Belongs to the cytochrome P450 family. The cofactor is heme.

Its subcellular location is the endoplasmic reticulum membrane. The protein localises to the microsome membrane. The enzyme catalyses an organic molecule + reduced [NADPH--hemoprotein reductase] + O2 = an alcohol + oxidized [NADPH--hemoprotein reductase] + H2O + H(+). Cytochromes P450 are a group of heme-thiolate monooxygenases. In liver microsomes, this enzyme is involved in an NADPH-dependent electron transport pathway. It oxidizes a variety of structurally unrelated compounds, including steroids, fatty acids, and xenobiotics. In the epoxidation of arachidonic acid it generates only 14,15- and 11,12-cis-epoxyeicosatrienoic acids. This Oryctolagus cuniculus (Rabbit) protein is Cytochrome P450 2C2 (CYP2C2).